The following is a 1857-amino-acid chain: Ankyrin repeat domain-containing protein 31 (1857 aa).

2 disordered regions span residues 1 to 30 (MENG…EDEE) and 195 to 215 (SEPG…DEES). The span at 195-207 (SEPGEEVTQTMTS) shows a compositional bias: polar residues. 3 ANK repeats span residues 475 to 504 (FGEN…NVNQ), 508 to 537 (DGWT…DVNV), and 541 to 570 (YQIT…DPLF). Positions 676 to 691 (KFGKSNLNSVKNSRTN) are enriched in polar residues. 5 disordered regions span residues 676–711 (KFGK…VDDR), 813–844 (VTTH…KGKA), 995–1038 (RDSS…TVVH), 1046–1065 (KAEK…NTDF), and 1075–1137 (ANSS…QNFR). Positions 692 to 704 (VSKRKGQKNRQQK) are enriched in basic residues. Over residues 814–839 (TTHQQPHTNQEQYSSPYKSLGNNSSN) the composition is skewed to polar residues. A compositionally biased stretch (basic and acidic residues) spans 1008-1019 (SLERKQDTDKNY). The span at 1023-1032 (GPNTSSSSRP) shows a compositional bias: polar residues. The span at 1082–1136 (QRKEKENVRKSDAELTHNDSEAERTLKSCEEKKKNMDSETHSPCDIQEHRKDQNF) shows a compositional bias: basic and acidic residues. ANK repeat units lie at residues 1162 to 1191 (KGES…DVNL), 1195 to 1224 (AGWT…NVNC), and 1228 to 1257 (DGIV…NPNQ). Disordered stretches follow at residues 1457 to 1479 (NSDI…AHAQ), 1540 to 1570 (GGLL…AENS), 1609 to 1640 (DPHS…AEPL), and 1663 to 1697 (AAAA…TTPR). Residues 1555–1570 (ASSSQPAALTPHAENS) are compositionally biased toward polar residues. Positions 1663 to 1683 (AAAASHTDSTQSSLSSASAHQ) are enriched in low complexity. The 96-residue stretch at 1687 to 1782 (KTVPHRNTTP…TYLGRELVKC (96 aa)) folds into the RAMA domain.

As to quaternary structure, interacts with REC114; the interaction is direct. Interacts with IHO1. In terms of tissue distribution, present in meiotic cells (at protein level).

The protein localises to the nucleus. It is found in the chromosome. In terms of biological role, required for DNA double-strand breaks (DSBs) formation during meiotic recombination. Regulates the spatial and temporal patterns of pre-DSB recombinosome assembly and recombination activity by acting as a scaffold that anchors REC114 and other factors to specific genomic locations, thereby regulating DSB formation. Plays a key role in recombination in the pseudoautosomal regions of sex chromosomes. The protein is Ankyrin repeat domain-containing protein 31 of Mus musculus (Mouse).